The chain runs to 287 residues: Eukaryotic translation initiation factor 3 subunit G (287 aa).

The disordered stretch occupies residues 163–207; it reads EEDLESKEKDTKLGPTVPGSGKYVAPGMRGDRPAVTGGAERRSEE. The RRM domain occupies 208-286; that stretch reads NTCRVTNLPE…LVLKVEWTRF (79 aa).

Belongs to the eIF-3 subunit G family. In terms of assembly, component of the eukaryotic translation initiation factor 3 (eIF-3) complex.

Its subcellular location is the cytoplasm. In terms of biological role, RNA-binding component of the eukaryotic translation initiation factor 3 (eIF-3) complex, which is involved in protein synthesis of a specialized repertoire of mRNAs and, together with other initiation factors, stimulates binding of mRNA and methionyl-tRNAi to the 40S ribosome. The eIF-3 complex specifically targets and initiates translation of a subset of mRNAs involved in cell proliferation. This subunit can bind 18S rRNA. This chain is Eukaryotic translation initiation factor 3 subunit G, found in Brugia malayi (Filarial nematode worm).